The primary structure comprises 61 residues: UPF0434 protein MS0934 (61 aa).

It belongs to the UPF0434 family.

The sequence is that of UPF0434 protein MS0934 from Mannheimia succiniciproducens (strain KCTC 0769BP / MBEL55E).